We begin with the raw amino-acid sequence, 276 residues long: Hydroxyethylthiazole kinase (276 aa).

The ATP site is built by R126 and S172. G199 is a substrate binding site.

This sequence belongs to the Thz kinase family. Requires Mg(2+) as cofactor.

The catalysed reaction is 5-(2-hydroxyethyl)-4-methylthiazole + ATP = 4-methyl-5-(2-phosphooxyethyl)-thiazole + ADP + H(+). Its pathway is cofactor biosynthesis; thiamine diphosphate biosynthesis; 4-methyl-5-(2-phosphoethyl)-thiazole from 5-(2-hydroxyethyl)-4-methylthiazole: step 1/1. Its function is as follows. Catalyzes the phosphorylation of the hydroxyl group of 4-methyl-5-beta-hydroxyethylthiazole (THZ). The polypeptide is Hydroxyethylthiazole kinase (Burkholderia pseudomallei (strain 1106a)).